Reading from the N-terminus, the 328-residue chain is D-cysteine desulfhydrase (328 aa).

The residue at position 51 (Lys51) is an N6-(pyridoxal phosphate)lysine.

The protein belongs to the ACC deaminase/D-cysteine desulfhydrase family. As to quaternary structure, homodimer. The cofactor is pyridoxal 5'-phosphate.

The enzyme catalyses D-cysteine + H2O = hydrogen sulfide + pyruvate + NH4(+) + H(+). Functionally, catalyzes the alpha,beta-elimination reaction of D-cysteine and of several D-cysteine derivatives. It could be a defense mechanism against D-cysteine. The sequence is that of D-cysteine desulfhydrase from Klebsiella pneumoniae subsp. pneumoniae (strain ATCC 700721 / MGH 78578).